The chain runs to 143 residues: Small ribosomal subunit protein uS12 (143 aa).

Position 62 is a hydroxyproline (Pro62).

Belongs to the universal ribosomal protein uS12 family. In terms of assembly, component of the 40S small ribosomal subunit.

The protein localises to the cytoplasm. The protein resides in the cytosol. It is found in the rough endoplasmic reticulum. The chain is Small ribosomal subunit protein uS12 (RPS23) from Ciona intestinalis (Transparent sea squirt).